The following is a 254-amino-acid chain: MAYISENELKFLRLLERTKRLTKEDMSANVWKVSAATKILNKMIYTLQNDETTNDILHEYRQEVLQLKLLAEAESKSSAEERLKVIEKIPRVFPDVQVTVADSKNDNEAESYDFEKESAAGLRATQRSIYRSDLRKQLLSSNKHRAQDTSEDQEFMKNELVEEELANSLATMARSFKTMMSAAGDVIKEDTERAILMAKEVDDNKTALGIQSERVERHAYKCGYDCFKVMLIVLIFMSFVSMVLMMKIFKKAST.

Residues 1-228 are Cytoplasmic-facing; the sequence is MAYISENELK…AYKCGYDCFK (228 aa). A helical; Anchor for type IV membrane protein transmembrane segment spans residues 229–249; it reads VMLIVLIFMSFVSMVLMMKIF. At 250–254 the chain is on the lumenal side; that stretch reads KKAST.

This sequence belongs to the USE1 family.

The protein localises to the endoplasmic reticulum membrane. SNARE that may be involved in targeting and fusion of Golgi-derived retrograde transport vesicles with the ER. The protein is Vesicle transport protein USE1 of Caenorhabditis elegans.